A 486-amino-acid polypeptide reads, in one-letter code: tRNA-2-methylthio-N(6)-dimethylallyladenosine synthase (486 aa).

In terms of domain architecture, MTTase N-terminal spans 35 to 151 (RNLYVESYGC…LPRLLATVDS (117 aa)). Residues C44, C80, C114, C189, C193, and C196 each contribute to the [4Fe-4S] cluster site. The 245-residue stretch at 175 to 419 (NSNGVSAFIS…IDKQRQHSFE (245 aa)) folds into the Radical SAM core domain. Residues 422-485 (LKDIGKVYQV…TGTLLGEICT (64 aa)) enclose the TRAM domain.

It belongs to the methylthiotransferase family. MiaB subfamily. As to quaternary structure, monomer. [4Fe-4S] cluster is required as a cofactor.

It is found in the cytoplasm. It catalyses the reaction N(6)-dimethylallyladenosine(37) in tRNA + (sulfur carrier)-SH + AH2 + 2 S-adenosyl-L-methionine = 2-methylsulfanyl-N(6)-dimethylallyladenosine(37) in tRNA + (sulfur carrier)-H + 5'-deoxyadenosine + L-methionine + A + S-adenosyl-L-homocysteine + 2 H(+). Catalyzes the methylthiolation of N6-(dimethylallyl)adenosine (i(6)A), leading to the formation of 2-methylthio-N6-(dimethylallyl)adenosine (ms(2)i(6)A) at position 37 in tRNAs that read codons beginning with uridine. This chain is tRNA-2-methylthio-N(6)-dimethylallyladenosine synthase, found in Amoebophilus asiaticus (strain 5a2).